The sequence spans 199 residues: Dephospho-CoA kinase (199 aa).

In terms of domain architecture, DPCK spans 4 to 199; the sequence is VLGITGGIAT…KWLEEQIGKK (196 aa). 12-17 serves as a coordination point for ATP; it reads ATGKST.

Belongs to the CoaE family.

It localises to the cytoplasm. The enzyme catalyses 3'-dephospho-CoA + ATP = ADP + CoA + H(+). It participates in cofactor biosynthesis; coenzyme A biosynthesis; CoA from (R)-pantothenate: step 5/5. Its function is as follows. Catalyzes the phosphorylation of the 3'-hydroxyl group of dephosphocoenzyme A to form coenzyme A. The chain is Dephospho-CoA kinase from Enterococcus faecalis (strain ATCC 700802 / V583).